The chain runs to 205 residues: N-(5'-phosphoribosyl)anthranilate isomerase (205 aa).

Belongs to the TrpF family.

It catalyses the reaction N-(5-phospho-beta-D-ribosyl)anthranilate = 1-(2-carboxyphenylamino)-1-deoxy-D-ribulose 5-phosphate. Its pathway is amino-acid biosynthesis; L-tryptophan biosynthesis; L-tryptophan from chorismate: step 3/5. The protein is N-(5'-phosphoribosyl)anthranilate isomerase of Clostridium acetobutylicum (strain ATCC 824 / DSM 792 / JCM 1419 / IAM 19013 / LMG 5710 / NBRC 13948 / NRRL B-527 / VKM B-1787 / 2291 / W).